The chain runs to 136 residues: UPF0213 protein ASA_0550 (136 aa).

One can recognise a GIY-YIG domain in the interval 17 to 92 (GQWSIYLVRT…KQQSKAFKER (76 aa)).

It belongs to the UPF0213 family.

The chain is UPF0213 protein ASA_0550 from Aeromonas salmonicida (strain A449).